A 124-amino-acid chain; its full sequence is Large ribosomal subunit protein bL12 (124 aa).

Belongs to the bacterial ribosomal protein bL12 family. In terms of assembly, homodimer. Part of the ribosomal stalk of the 50S ribosomal subunit. Forms a multimeric L10(L12)X complex, where L10 forms an elongated spine to which 2 to 4 L12 dimers bind in a sequential fashion. Binds GTP-bound translation factors.

Functionally, forms part of the ribosomal stalk which helps the ribosome interact with GTP-bound translation factors. Is thus essential for accurate translation. The sequence is that of Large ribosomal subunit protein bL12 from Mycoplasma mobile (strain ATCC 43663 / 163K / NCTC 11711) (Mesomycoplasma mobile).